Reading from the N-terminus, the 439-residue chain is MKEIGNRESGIVDGQRNGASVGSDPTALPIPHSPLPIPGAHARPPRIALIAGEASGDILGAGLIEQLRLRYPNAEFVGIGGDAMRGVGCQTWFDASELAVMGLTEVLRHLPRLLKLRSAFRERVLAWKPDVFIGIDAPDFNLPVERWLKQRGIKTVHYVSPSVWAWREKRAEKIGVSADLVLCLFPMEPPIYARHGVDARFVGHPMADDIAYQADRAAARATLGLSASSTVLAVLPGSRHGEISRLGDTFFQAAWLVSEHLPNLHVLVPAANPGCKQLLAEQLSRSSLPVMRSHLLDGQARTAMLAADVVLLASGTATLEAMLVKRPMVVGYKVAPLTYRIVKLLGLLKVNRYALPNILANDDLAPELMQDDCAPERLCVALLDWFKHPDKVAALQPRYLALHAQLRRDASARAADAVAGLLEGRDSEVGIWDSAGAKA.

Positions 1–35 (MKEIGNRESGIVDGQRNGASVGSDPTALPIPHSPL) are disordered.

The protein belongs to the LpxB family.

It carries out the reaction a lipid X + a UDP-2-N,3-O-bis[(3R)-3-hydroxyacyl]-alpha-D-glucosamine = a lipid A disaccharide + UDP + H(+). It functions in the pathway bacterial outer membrane biogenesis; LPS lipid A biosynthesis. Functionally, condensation of UDP-2,3-diacylglucosamine and 2,3-diacylglucosamine-1-phosphate to form lipid A disaccharide, a precursor of lipid A, a phosphorylated glycolipid that anchors the lipopolysaccharide to the outer membrane of the cell. The chain is Lipid-A-disaccharide synthase from Xanthomonas euvesicatoria pv. vesicatoria (strain 85-10) (Xanthomonas campestris pv. vesicatoria).